Consider the following 1108-residue polypeptide: AP-3 complex subunit beta (1108 aa).

HEAT repeat units follow at residues 90–127, 327–363, 397–433, and 434–471; these read DSAL…IDII, IEAQ…LRPS, ENIG…STVP, and DVTE…LNAT. Positions 480-490 are enriched in basic and acidic residues; the sequence is KEKEKEKDVKE. Disordered regions lie at residues 480–501, 736–797, and 811–835; these read KEKE…HSSS, DEEE…YDGE, and LFGI…GEEE. 2 stretches are compositionally biased toward acidic residues: residues 736–764 and 780–797; these read DEEE…EDFF and YDED…YDGE.

The protein belongs to the adaptor complexes large subunit family. Adaptor protein complex 3 (AP-3) is a heterotetramer composed of two large adaptins (delta-type subunit and beta-type subunit), a medium adaptin (mu-type subunit) and a small adaptin (sigma-type subunit).

The protein resides in the endosome membrane. Part of the AP-3 complex, an adaptor-related complex which is essential for the compartmentalization of the endocytic pathway. In Dictyostelium discoideum (Social amoeba), this protein is AP-3 complex subunit beta (ap3b-1).